A 241-amino-acid chain; its full sequence is Large ribosomal subunit protein uL30 (241 aa).

The segment at 1-32 is disordered; that stretch reads MATTLKPETLQKKEKAQQKTAEERAAAKKVRK. Over residues 9–26 the composition is skewed to basic and acidic residues; it reads TLQKKEKAQQKTAEERAA.

The protein belongs to the universal ribosomal protein uL30 family. As to quaternary structure, component of the large ribosomal subunit. Mature ribosomes consist of a small (40S) and a large (60S) subunit. The 40S subunit contains about 32 different proteins and 1 molecule of RNA (18S). The 60S subunit contains 45 different proteins and 3 molecules of RNA (25S, 5.8S and 5S).

It localises to the cytoplasm. Its function is as follows. Component of the ribosome, a large ribonucleoprotein complex responsible for the synthesis of proteins in the cell. The small ribosomal subunit (SSU) binds messenger RNAs (mRNAs) and translates the encoded message by selecting cognate aminoacyl-transfer RNA (tRNA) molecules. The large subunit (LSU) contains the ribosomal catalytic site termed the peptidyl transferase center (PTC), which catalyzes the formation of peptide bonds, thereby polymerizing the amino acids delivered by tRNAs into a polypeptide chain. The nascent polypeptides leave the ribosome through a tunnel in the LSU and interact with protein factors that function in enzymatic processing, targeting, and the membrane insertion of nascent chains at the exit of the ribosomal tunnel. This is Large ribosomal subunit protein uL30 from Candida albicans (strain SC5314 / ATCC MYA-2876) (Yeast).